The sequence spans 132 residues: Pro-MCH 2 (132 aa).

The signal sequence occupies residues 1–24; sequence MRDSVLSVIFALALFLECYTPSMA. C120 and C129 are oxidised to a cystine.

The protein belongs to the melanin-concentrating hormone family. In terms of tissue distribution, pituitary gland. Produced in neurons of lateral basal hypothalamus which project both to the brain and to the neural lobe of the pituitary gland from where MCH is released.

Plays a role in skin pigmentation by antagonizing the action of melanotropin alpha. Induces melanin concentration within the melanophores. May participate in the control of the hypothalamo-pituitary adrenal gland axis by inhibiting the release of ACTH. This Oncorhynchus keta (Chum salmon) protein is Pro-MCH 2 (mch2).